We begin with the raw amino-acid sequence, 358 residues long: Period circadian protein (358 aa).

2 PAS domains span residues 1-120 (GVVM…QTVP) and 138-240 (FIMR…YIIE).

As to quaternary structure, forms a heterodimer with timeless (TIM); the complex then translocates into the nucleus. In terms of processing, phosphorylated with a circadian rhythmicity.

The protein localises to the nucleus. In terms of biological role, involved in the generation of biological rhythms. The biological cycle depends on the rhythmic formation and nuclear localization of the tim-per complex. Light induces the degradation of tim, which promotes elimination of per. Nuclear activity of the heterodimer coordinatively regulates per and tim transcription negative feedback loop. Behaves as a negative element in circadian transcriptional loop. Does not appear to bind DNA, suggesting indirect transcriptional inhibition. This is Period circadian protein (per) from Hyalophora cecropia (Cecropia moth).